The sequence spans 272 residues: Hydroxyacylglutathione hydrolase (272 aa).

Zn(2+) contacts are provided by H62, H64, D66, H67, H126, D146, and H184.

Belongs to the metallo-beta-lactamase superfamily. Glyoxalase II family. Monomer. Requires Zn(2+) as cofactor.

It carries out the reaction an S-(2-hydroxyacyl)glutathione + H2O = a 2-hydroxy carboxylate + glutathione + H(+). Its pathway is secondary metabolite metabolism; methylglyoxal degradation; (R)-lactate from methylglyoxal: step 2/2. In terms of biological role, thiolesterase that catalyzes the hydrolysis of S-D-lactoyl-glutathione to form glutathione and D-lactic acid. In Saccharophagus degradans (strain 2-40 / ATCC 43961 / DSM 17024), this protein is Hydroxyacylglutathione hydrolase.